A 941-amino-acid polypeptide reads, in one-letter code: MSSAPPFAAALAWSGHLRRRLDAHPDLAAWLANACAHPVSANVLAAWQAELSGPDAPEVLPVEQCRGMLRKLRERVFLTLIVRDLGGQADLEEVVGAMTVLADIAVGTAYRSVAAELAAVHGLPREQSTGDPQEMLIVGMGKLGGRELNVSSDIDLVMLYGDEGETDGPRRISNHEFYGRLTRRMMPVLSEVDADGQVFRTDLRLRPDGDAGPLAWSLDALEHYLIGQGREWERYAWLKARLMPAQAFADSNPDAQARQLESLRVPFVYRKYFDFDALAALRALRERIRQDWQRRALARNGVDSANNIKLGDGGIREIEFIVQLSQLIRGGRMPALQRRGLLEALHAERAAGLVPEGDAQKLEAAYRFLRRTEHALQYREDEQTHLLPADPAQRAALAAALGYEPAAFERTLAEHRAFVSQTFRNAFRLAGMGEEDDSPAPARTPANGHGMRPHAGALHDIEERLAGQIQRDFPEHAEDLLRRTETLLGSHRVRSLPDSSRHRLEALLPAALTAAAQTSAPMDAALRLFDLIETIAQRSAYLALLAEYPDTLARVARMVAASPWAAQYLTQHPLLLDSLIDWRTLFEPLDFAQVARQLAADLDACRLPDGEPDIERQMNLMRDVQRQASFQLLAQDLEGELTVEKLADQLSALADLLLAETIRRVWPLVNRRPGAEPHLAVIAYGKLGGKELGYASDLDLVFLFDDDREDAAELYAKLGRRMTSWLSTMTSSGRLYEVDLRLRPDGDAGLLAVSLEAFEQYQRSHAWPWEHQALTRARYAAGDTEAGARFERIRADILVMPRDVQALRGEVLGMRDKISAGHPNRSELFDVKHDRGGMVDVEFVTQYLVLCHAATHRVLVNNLGNIALLRLAGEAGLIPAPLALAAGDAYRTLRRAQHQLRLKGVDKARVPPGQLAAERATVCELWQTVLQDGTIAQAEVK.

The segment at 1 to 431 is adenylyl removase; the sequence is MSSAPPFAAA…TFRNAFRLAG (431 aa). Positions 447–941 are adenylyl transferase; that stretch reads NGHGMRPHAG…DGTIAQAEVK (495 aa).

Belongs to the GlnE family. Requires Mg(2+) as cofactor.

The catalysed reaction is [glutamine synthetase]-O(4)-(5'-adenylyl)-L-tyrosine + phosphate = [glutamine synthetase]-L-tyrosine + ADP. The enzyme catalyses [glutamine synthetase]-L-tyrosine + ATP = [glutamine synthetase]-O(4)-(5'-adenylyl)-L-tyrosine + diphosphate. Functionally, involved in the regulation of glutamine synthetase GlnA, a key enzyme in the process to assimilate ammonia. When cellular nitrogen levels are high, the C-terminal adenylyl transferase (AT) inactivates GlnA by covalent transfer of an adenylyl group from ATP to specific tyrosine residue of GlnA, thus reducing its activity. Conversely, when nitrogen levels are low, the N-terminal adenylyl removase (AR) activates GlnA by removing the adenylyl group by phosphorolysis, increasing its activity. The regulatory region of GlnE binds the signal transduction protein PII (GlnB) which indicates the nitrogen status of the cell. In Bordetella bronchiseptica (strain ATCC BAA-588 / NCTC 13252 / RB50) (Alcaligenes bronchisepticus), this protein is Bifunctional glutamine synthetase adenylyltransferase/adenylyl-removing enzyme.